A 216-amino-acid polypeptide reads, in one-letter code: Large ribosomal subunit protein uL1 (216 aa).

This sequence belongs to the universal ribosomal protein uL1 family. As to quaternary structure, part of the 50S ribosomal subunit.

Its function is as follows. Binds directly to 23S rRNA. Probably involved in E site tRNA release. Protein L1 is also a translational repressor protein, it controls the translation of its operon by binding to its mRNA. In Thermococcus kodakarensis (strain ATCC BAA-918 / JCM 12380 / KOD1) (Pyrococcus kodakaraensis (strain KOD1)), this protein is Large ribosomal subunit protein uL1.